Consider the following 125-residue polypeptide: C-X-C motif chemokine 9 (125 aa).

Positions 1 to 22 (MKKSGVLFLLGIILLVLIGVQG) are cleaved as a signal peptide. Intrachain disulfides connect Cys31–Cys58 and Cys33–Cys74. The disordered stretch occupies residues 93-125 (VSQKKKQKNGKKHQKKKVLKVRKSQRSRQKKTT). The segment covering 94–125 (SQKKKQKNGKKHQKKKVLKVRKSQRSRQKKTT) has biased composition (basic residues).

The protein belongs to the intercrine alpha (chemokine CxC) family.

It is found in the secreted. In terms of biological role, cytokine that affects the growth, movement, or activation state of cells that participate in immune and inflammatory response. Chemotactic for activated T-cells. Binds to CXCR3. The protein is C-X-C motif chemokine 9 (CXCL9) of Homo sapiens (Human).